The chain runs to 144 residues: Maximins 4/H3 type 3 (144 aa).

A signal peptide spans 1 to 18 (MNFKYIIAVSFFIASAYA). Residues 19-43 (RTEEKDVQSLSQRDVLEEESLREIR) constitute a propeptide that is removed on maturation. N70 carries the asparagine amide modification. The propeptide occupies 74–123 (TAEDHEVMKRLEAVMRDLDSLDHPEEASERQTRGFNQEEIANLFTKKEKR). At I143 the chain carries Isoleucine amide.

Belongs to the bombinin family. As to expression, expressed by the skin glands.

The protein resides in the secreted. Its function is as follows. Maximin-4 shows antibacterial activity against both Gram-positive and Gram-negative bacteria. It also shows antimicrobial activity against the fungus C.albicans, but not against A.flavus nor P.uticale. It has little hemolytic activity. It does not possess a significant cytotoxicity against tumor cell lines. It does not possess a significant anti-HIV activity. Maximin-H3 shows antibacterial activity against both Gram-positive and Gram-negative bacteria. It also shows antimicrobial activity against the fungus C.albicans. Shows strong hemolytic activity. The polypeptide is Maximins 4/H3 type 3 (Bombina maxima (Giant fire-bellied toad)).